The following is an 84-amino-acid chain: Toxin Tf2 (84 aa).

The signal sequence occupies residues 1-20; the sequence is MKRFLLFISILMMIGTIVVG. The 63-residue stretch at 21 to 83 folds into the LCN-type CS-alpha/beta domain; the sequence is KEGYAMDHEG…VWDYATNKCG (63 aa). 4 disulfides stabilise this stretch: C31/C82, C35/C58, C43/C63, and C47/C65. At C82 the chain carries Cysteine amide.

This sequence belongs to the long (4 C-C) scorpion toxin superfamily. Sodium channel inhibitor family. Beta subfamily. Contains 4 disulfide bonds. Expressed by the venom gland.

It localises to the secreted. In terms of biological role, beta toxins bind voltage-independently at site-4 of sodium channels (Nav) and shift the voltage of activation toward more negative potentials thereby affecting sodium channel activation and promoting spontaneous and repetitive firing. This toxin is active against hNav1.3/SCN3A. This Tityus fasciolatus (Central Brazilian scorpion) protein is Toxin Tf2.